The primary structure comprises 168 residues: DOMON domain-containing protein CBG21753 (168 aa).

The first 17 residues, 1–17, serve as a signal peptide directing secretion; that stretch reads MIKSMILVALILAFASA. Residues 25 to 143 enclose the DOMON domain; the sequence is SGFQSYWRFA…CQKWRWIKSG (119 aa). 2 N-linked (GlcNAc...) asparagine glycosylation sites follow: asparagine 35 and asparagine 94. The tract at residues 148–168 is disordered; that stretch reads GQLTRNSKSPKDKKVCPMECN. Residues 156–168 show a composition bias toward basic and acidic residues; sequence SPKDKKVCPMECN.

It is found in the secreted. In Caenorhabditis briggsae, this protein is DOMON domain-containing protein CBG21753.